We begin with the raw amino-acid sequence, 265 residues long: MTKERSRAAKRSEEELLDIKQAASLLNVSEASLRRWTDSGKLPCYRVGDQRARRFRREDLVAFVSVSQETASPAQGADRPDSVKNAAKTQVAGMDIAYHDHICAIYGRPAGRLKLSVPLLREGLKAGDICFLNATQPGKAHILKVLREVYPDVHKAIKDGQLIFPALKRNKAEMLDQLEEMFLKATYSGEQKLRLVGDMEWALSVDWSEQEVYEYELEYNNTLGHRFPIISLCQYDVRVFSSKGILDALKSHEDTYKYPLRDCCI.

A DNA-binding region (H-T-H motif) is located at residues 17–36 (LDIKQAASLLNVSEASLRRW).

In terms of assembly, monomer.

In terms of biological role, transcriptional repressor of the dcmA gene and of its own gene. This Methylorubrum extorquens (strain DSM 6343 / CIP 106787 / DM4) (Methylobacterium extorquens) protein is Transcriptional repressor DcmR (dcmR).